We begin with the raw amino-acid sequence, 476 residues long: Cysteine--tRNA ligase (476 aa).

Cys-27 is a Zn(2+) binding site. The 'HIGH' region motif lies at 29–39 (PTTYNYIHLGN). Cys-207, His-232, and Glu-236 together coordinate Zn(2+). The 'KMSKS' region motif lies at 264 to 268 (KMSKS). Lys-267 contacts ATP.

It belongs to the class-I aminoacyl-tRNA synthetase family. Monomer. It depends on Zn(2+) as a cofactor.

It localises to the cytoplasm. The catalysed reaction is tRNA(Cys) + L-cysteine + ATP = L-cysteinyl-tRNA(Cys) + AMP + diphosphate. In Moorella thermoacetica (strain ATCC 39073 / JCM 9320), this protein is Cysteine--tRNA ligase.